We begin with the raw amino-acid sequence, 1058 residues long: SMC5-SMC6 complex localization factor protein 1 (1058 aa).

BRCT domains are found at residues 12–77 (MTGF…IHSA) and 119–196 (GAPG…GDFL). The NSE5-like domain; mediates interaction with SLF2 stretch occupies residues 410–1058 (PRGVLNLIES…MMCRSVMEFS (649 aa)). 3 ANK repeats span residues 806-836 (KGET…DINV), 840-869 (AGWT…EVDL), and 874-903 (DGVT…PVLL). Residue Lys931 forms a Glycyl lysine isopeptide (Lys-Gly) (interchain with G-Cter in SUMO2) linkage.

As to quaternary structure, interacts (via N-terminus) with SLF2; this interaction links RAD18 to the SMC5-SMC6 complex. Interacts (via BRCT domains) with RAD18; this interaction occurs in a SLF2-independent manner. Interacts with SMC6. Interacts (via BRCT domains) with RAD18 (via C-terminus and phosphorylated form); this interaction is required for efficient repair of UV-induced DNA damage.

The protein resides in the nucleus. Its subcellular location is the cytoplasm. It is found in the cytoskeleton. The protein localises to the microtubule organizing center. It localises to the centrosome. In terms of biological role, plays a role in the DNA damage response (DDR) pathway by regulating postreplication repair of UV-damaged DNA and genomic stability maintenance. The SLF1-SLF2 complex acts to link RAD18 with the SMC5-SMC6 complex at replication-coupled interstrand cross-links (ICL) and DNA double-strand breaks (DSBs) sites on chromatin during DNA repair in response to stalled replication forks. Promotes the recruitment of SLF2 and the SMC5-SMC6 complex to DNA lesions. In Homo sapiens (Human), this protein is SMC5-SMC6 complex localization factor protein 1.